The following is a 475-amino-acid chain: Amino acid permease 8 (475 aa).

A disordered region spans residues 1-22 (MDAYNNPSAVESGDAAVKSVDD). Topologically, residues 1–31 (MDAYNNPSAVESGDAAVKSVDDDGREKRTGT) are cytoplasmic. 2 helical membrane passes run 32–52 (FWTA…LSLA) and 53–73 (WAIA…FAII). Residues 74–120 (TYYTSTLLADCYRSPDSITGTRNYNYMGVVRSYLGGKKVQLCGVAQY) are Cytoplasmic-facing. The chain crosses the membrane as a helical span at residues 121 to 141 (VNLVGVTIGYTITASISLVAI). The Extracellular portion of the chain corresponds to 142–157 (GKSNCYHDKGHKAKCS). A helical membrane pass occupies residues 158-178 (VSNYPYMAAFGIVQIILSQLP). Residues 179–185 (NFHKLSF) lie on the Cytoplasmic side of the membrane. The chain crosses the membrane as a helical span at residues 186–206 (LSIIAAVMSFSYASIGIGLAI). Over 207–236 (ATVASGKIGKTELTGTVIGVDVTASEKVWK) the chain is Extracellular. The helical transmembrane segment at 237 to 257 (LFQAIGDIAFSYAFTTILIEI) threads the bilayer. The Cytoplasmic segment spans residues 258-276 (QDTLRSSPPENKVMKRASL). The chain crosses the membrane as a helical span at residues 277–297 (VGVSTTTVFYILCGCIGYAAF). Topologically, residues 298–314 (GNQAPGDFLTDFGFYEP) are extracellular. Residues 315-335 (YWLIDFANACIALHLIGAYQV) form a helical membrane-spanning segment. At 336 to 378 (YAQPFFQFVEENCNKKWPQSNFINKEYSSKVPLLGKCRVNLFR) the chain is on the cytoplasmic side. Residues 379–398 (LVWRTCYVVLTTFVAMIFPF) form a helical membrane-spanning segment. The Extracellular segment spans residues 399 to 401 (FNA). The helical transmembrane segment at 402–424 (ILGLLGAFAFWPLTVYFPVAMHI) threads the bilayer. At 425-441 (AQAKVKKYSRRWLALNL) the chain is on the cytoplasmic side. The helical transmembrane segment at 442–462 (LVLVCLIVSALAAVGSIIGLI) threads the bilayer. Topologically, residues 463–475 (NSVKSYKPFKNLD) are extracellular.

Belongs to the amino acid/polyamine transporter 2 family. Amino acid/auxin permease (AAAP) (TC 2.A.18.2) subfamily. Expressed in flower buds, siliques, developing seeds and funiculi.

It localises to the cell membrane. Functionally, amino acid-proton symporter. Stereospecific transporter with a broad specificity for glutamate, aspartate and neutral and acidic amino acids. In Arabidopsis thaliana (Mouse-ear cress), this protein is Amino acid permease 8 (AAP8).